Reading from the N-terminus, the 363-residue chain is Carbamoyl phosphate synthase small chain (363 aa).

Positions 1 to 173 (MMKAFLVLDN…SKYIFGTHTG (173 aa)) are CPSase. Residues serine 46, glycine 225, and glycine 227 each contribute to the L-glutamine site. A Glutamine amidotransferase type-1 domain is found at 177–363 (KLAVYDYGVK…YDLVEKTKKG (187 aa)). The active-site Nucleophile is cysteine 253. 5 residues coordinate L-glutamine: leucine 254, glutamine 257, asparagine 295, glycine 297, and phenylalanine 298. Residues histidine 336 and glutamate 338 contribute to the active site.

This sequence belongs to the CarA family. In terms of assembly, composed of two chains; the small (or glutamine) chain promotes the hydrolysis of glutamine to ammonia, which is used by the large (or ammonia) chain to synthesize carbamoyl phosphate. Tetramer of heterodimers (alpha,beta)4.

It catalyses the reaction hydrogencarbonate + L-glutamine + 2 ATP + H2O = carbamoyl phosphate + L-glutamate + 2 ADP + phosphate + 2 H(+). The enzyme catalyses L-glutamine + H2O = L-glutamate + NH4(+). The protein operates within amino-acid biosynthesis; L-arginine biosynthesis; carbamoyl phosphate from bicarbonate: step 1/1. It participates in pyrimidine metabolism; UMP biosynthesis via de novo pathway; (S)-dihydroorotate from bicarbonate: step 1/3. Small subunit of the glutamine-dependent carbamoyl phosphate synthetase (CPSase). CPSase catalyzes the formation of carbamoyl phosphate from the ammonia moiety of glutamine, carbonate, and phosphate donated by ATP, constituting the first step of 2 biosynthetic pathways, one leading to arginine and/or urea and the other to pyrimidine nucleotides. The small subunit (glutamine amidotransferase) binds and cleaves glutamine to supply the large subunit with the substrate ammonia. In Leptospira interrogans serogroup Icterohaemorrhagiae serovar copenhageni (strain Fiocruz L1-130), this protein is Carbamoyl phosphate synthase small chain.